The primary structure comprises 226 residues: Myosin regulatory light chain 10 (226 aa).

EF-hand domains are found at residues 84 to 119, 154 to 189, and 190 to 225; these read NSPASASQAFTIMDQNRDGFIDKEDLRDTFAALGRI, DPEETILHAFKVFDTEGKGFVKADVIKEKLMTQADR, and FSEEEVKQMFAAFPPDVCGNLDYRNLCYVITHGEEK. Ca(2+) contacts are provided by aspartate 97, asparagine 99, aspartate 101, and aspartate 108.

Myosin is a hexamer of 2 heavy chains and 4 light chains.

The polypeptide is Myosin regulatory light chain 10 (MYL10) (Homo sapiens (Human)).